A 93-amino-acid polypeptide reads, in one-letter code: Protein IDA-LIKE 4 (93 aa).

The N-terminal stretch at methionine 1–aspartate 35 is a signal peptide.

Expressed in mainly in buds. Lower levels in roots. Detected at the base of pedicel, in the floral and funicule abscission zones, in vascular tissues, in guard cells of young seedlings and in hydathodes.

It localises to the secreted. It is found in the extracellular space. In terms of biological role, may be involved in floral abscission. In Arabidopsis thaliana (Mouse-ear cress), this protein is Protein IDA-LIKE 4 (IDL4).